The following is a 660-amino-acid chain: Solute carrier family 5 member 4 (660 aa).

The Cytoplasmic segment spans residues 1-28; sequence MASTLSPSTVTKTPGPPEISERIQNAAD. The helical transmembrane segment at 29–47 threads the bilayer; the sequence is ISVIVIYFVVVMAVGLWAM. Residues 48 to 64 lie on the Extracellular side of the membrane; it reads LRTNRGTVGGFFLAGRD. The chain crosses the membrane as a helical span at residues 65–85; that stretch reads VTWWPMGASLFASNIGSGHFV. The Cytoplasmic portion of the chain corresponds to 86–105; sequence GLAGTGAASGIAIAAFEWNA. Residues 106 to 126 form a helical membrane-spanning segment; the sequence is LLLLLVLGWFFVPIYIKAGVM. The Extracellular segment spans residues 127–171; it reads TMPEYLRKRFGGKRLQIYLSILSLFICVALRISSDIFSGAIFIKL. The chain crosses the membrane as a helical span at residues 172-191; sequence ALGLDLYLAIFSLLAITAIY. The Cytoplasmic segment spans residues 192-208; the sequence is TITGGLASVIYTDTLQT. Residues 209 to 229 traverse the membrane as a helical segment; sequence IIMLIGSFILMGFAFVEVGGY. The Extracellular segment spans residues 230–270; it reads ESFTEKYMNAIPTIVEGDNLTISPKCYTPQGDSFHIFRDAV. An N-linked (GlcNAc...) asparagine glycan is attached at asparagine 248. Residues 271 to 291 traverse the membrane as a helical segment; it reads TGDIPWPGMIFGMTVVAAWYW. Residues 292 to 314 lie on the Cytoplasmic side of the membrane; it reads CTDQVIVQRCLSGKDMSHVKAAC. A helical membrane pass occupies residues 315–334; that stretch reads IMCGYLKLLPMFLMVMPGMI. Residues 335-423 are Extracellular-facing; the sequence is SRILYTEKVA…RKQASEKELL (89 aa). The helical transmembrane segment at 424–443 threads the bilayer; it reads IAGRLFIILLIVISIVWVPL. The Cytoplasmic segment spans residues 444–455; the sequence is VQVAQNGQLFHY. Residues 456-476 form a helical membrane-spanning segment; the sequence is IESISSYLGPPIAAVFLLAIF. The Extracellular portion of the chain corresponds to 477-526; the sequence is CKRVNEQGAFWGLIIGFVMGLIRMIAEFVYGTGSCLAASNCPQIICGVHY. The helical transmembrane segment at 527–547 threads the bilayer; sequence LYFALILFFVSILVVLAISLL. Residues 548–638 are Cytoplasmic-facing; sequence TKPIPDVHLY…TDTSEKPLWK (91 aa). A helical membrane pass occupies residues 639 to 659; that stretch reads TIVNINAILLLAVAVFVHGYF.

This sequence belongs to the sodium:solute symporter (SSF) (TC 2.A.21) family. In terms of tissue distribution, kidney, intestine, liver, skeletal muscle and spleen.

It is found in the cell membrane. The catalysed reaction is D-glucose(out) + 2 Na(+)(out) = D-glucose(in) + 2 Na(+)(in). Its activity is regulated as follows. Inhibited by phlorizin. Functionally, low-affinity sodium/D-glucose symporter with a great selectivity for sugars (D-glucose &gt;&gt; D-galactose). Na(+) and D-glucose transport are tightly coupled at neutral pH, but at acidic pH, ion transport is uncoupled from sugar transport. This is Solute carrier family 5 member 4 from Sus scrofa (Pig).